We begin with the raw amino-acid sequence, 147 residues long: Nucleoside diphosphate kinase (147 aa).

The ATP site is built by lysine 11, phenylalanine 59, arginine 87, threonine 93, arginine 104, and asparagine 114. The active-site Pros-phosphohistidine intermediate is histidine 117.

The protein belongs to the NDK family. Homotetramer. The cofactor is Mg(2+).

The protein resides in the cytoplasm. The enzyme catalyses a 2'-deoxyribonucleoside 5'-diphosphate + ATP = a 2'-deoxyribonucleoside 5'-triphosphate + ADP. It catalyses the reaction a ribonucleoside 5'-diphosphate + ATP = a ribonucleoside 5'-triphosphate + ADP. Functionally, major role in the synthesis of nucleoside triphosphates other than ATP. The ATP gamma phosphate is transferred to the NDP beta phosphate via a ping-pong mechanism, using a phosphorylated active-site intermediate. In Anaeromyxobacter dehalogenans (strain 2CP-C), this protein is Nucleoside diphosphate kinase.